A 339-amino-acid polypeptide reads, in one-letter code: Lipopolysaccharide 1,2-glucosyltransferase (339 aa).

Residues 35 to 40 and 132 to 133 contribute to the UDP site; these read GIDENY and DA. Mg(2+) is bound by residues Asp132 and Asp134. Short sequence motifs (DXD) lie at residues 132-134 and 219-221; these read DAD and DQD. Mg(2+) is bound at residue His268. Residue 268–274 participates in UDP binding; that stretch reads HYTGITK.

This sequence belongs to the glycosyltransferase 8 family. The cofactor is Mg(2+).

It localises to the cell inner membrane. The enzyme catalyses UDP-glucose + [lipopolysaccharide] = UDP + D-glucosyl-[lipopolysaccharide].. It participates in bacterial outer membrane biogenesis; LPS core biosynthesis. Glucosyltransferase involved in the biosynthesis of the core oligosaccharide region of lipopolysaccharide (LPS). Catalyzes the addition of a glucose (glucose II) to the outer-core galactose I. Has a marked preference for its specific donor substrate, but it appears to have a relaxed specificity for alternate LPS acceptor residues, providing the overall size of the acceptor is conserved. The protein is Lipopolysaccharide 1,2-glucosyltransferase of Escherichia coli.